Consider the following 418-residue polypeptide: AP-3 complex subunit mu-2 (418 aa).

The region spanning 176-417 is the MHD domain; sequence NNEAYFDVVE…MTKAGKFQVR (242 aa).

The protein belongs to the adaptor complexes medium subunit family. As to quaternary structure, adaptor protein complex 3 (AP-3) is a heterotetramer composed of two large adaptins (delta-type subunit AP3D1 and beta-type subunit AP3B1 or AP3B2), a medium adaptin (mu-type subunit AP3M1 or AP3M2) and a small adaptin (sigma-type subunit APS1 or AP3S2). AP-3 associates with the BLOC-1 complex.

The protein localises to the golgi apparatus. It is found in the cytoplasmic vesicle membrane. Its function is as follows. Component of the adaptor complexes which link clathrin to receptors in coated vesicles. Clathrin-associated protein complexes are believed to interact with the cytoplasmic tails of membrane proteins, leading to their selection and concentration. Ap47 is a subunit of the plasma membrane adaptor. In concert with the BLOC-1 complex, AP-3 is required to target cargos into vesicles assembled at cell bodies for delivery into neurites and nerve terminals. The sequence is that of AP-3 complex subunit mu-2 (Ap3m2) from Rattus norvegicus (Rat).